The chain runs to 425 residues: UDP-N-acetylglucosamine 1-carboxyvinyltransferase (425 aa).

23–24 (KN) lines the phosphoenolpyruvate pocket. Arginine 100 contributes to the UDP-N-acetyl-alpha-D-glucosamine binding site. Catalysis depends on cysteine 124, which acts as the Proton donor. 2-(S-cysteinyl)pyruvic acid O-phosphothioketal is present on cysteine 124. 2 residues coordinate UDP-N-acetyl-alpha-D-glucosamine: aspartate 313 and isoleucine 335.

The protein belongs to the EPSP synthase family. MurA subfamily.

It localises to the cytoplasm. It carries out the reaction phosphoenolpyruvate + UDP-N-acetyl-alpha-D-glucosamine = UDP-N-acetyl-3-O-(1-carboxyvinyl)-alpha-D-glucosamine + phosphate. It functions in the pathway cell wall biogenesis; peptidoglycan biosynthesis. Cell wall formation. Adds enolpyruvyl to UDP-N-acetylglucosamine. This chain is UDP-N-acetylglucosamine 1-carboxyvinyltransferase, found in Wolbachia sp. subsp. Drosophila simulans (strain wRi).